Here is a 71-residue protein sequence, read N- to C-terminus: Hainantoxin-X-2 (71 aa).

Residues 1–26 (MKTAIFTVVLALAVFAVLCLVVSTHA) form the signal peptide. Positions 27–43 (ERHSKTDMEDSPMIQER) are excised as a propeptide. 2 disulfides stabilise this stretch: cysteine 52/cysteine 65 and cysteine 61/cysteine 70.

This sequence belongs to the neurotoxin 36 family. 02 subfamily. Expressed by the venom gland.

Its subcellular location is the secreted. In terms of biological role, reversibly blocks N-type calcium channels (Cav2.2/CACNA1B) in rat dorsal root ganglion cells. Elicits no toxic symptoms in either vertebrates or invertebrates during a period of 48 hours post-injection, when it was assayed in vivo by direct injection into mice and cockroaches. This is Hainantoxin-X-2 from Cyriopagopus hainanus (Chinese bird spider).